The chain runs to 225 residues: UPF0758 protein NMC1174 (225 aa).

Positions 102 to 224 (VLSDPDTVAD…VRSFRQLGLM (123 aa)) constitute an MPN domain. Zn(2+) contacts are provided by H173, H175, and D186. A JAMM motif motif is present at residues 173–186 (HNHPGGSPEPSQED).

This sequence belongs to the UPF0758 family.

The protein is UPF0758 protein NMC1174 of Neisseria meningitidis serogroup C / serotype 2a (strain ATCC 700532 / DSM 15464 / FAM18).